We begin with the raw amino-acid sequence, 593 residues long: Aspartate--tRNA ligase (593 aa).

Position 180 (Glu-180) interacts with L-aspartate. The tract at residues 204–207 (QIFK) is aspartate. Position 226 (Arg-226) interacts with L-aspartate. ATP is bound by residues 226-228 (RDE) and Gln-235. An L-aspartate-binding site is contributed by His-453. Position 487 (Glu-487) interacts with ATP. Arg-494 is an L-aspartate binding site. 539–542 (GLDR) is an ATP binding site.

The protein belongs to the class-II aminoacyl-tRNA synthetase family. Type 1 subfamily. Homodimer.

The protein localises to the cytoplasm. The catalysed reaction is tRNA(Asp) + L-aspartate + ATP = L-aspartyl-tRNA(Asp) + AMP + diphosphate. Catalyzes the attachment of L-aspartate to tRNA(Asp) in a two-step reaction: L-aspartate is first activated by ATP to form Asp-AMP and then transferred to the acceptor end of tRNA(Asp). This Clostridium botulinum (strain 657 / Type Ba4) protein is Aspartate--tRNA ligase.